Here is a 651-residue protein sequence, read N- to C-terminus: Probable potassium transport system protein Kup (651 aa).

The next 12 membrane-spanning stretches (helical) occupy residues Leu-41 to Phe-61, Val-82 to Val-102, Leu-130 to Pro-150, Ile-163 to Leu-183, Val-194 to Leu-214, Phe-235 to Thr-255, Trp-276 to Leu-296, Met-309 to Ala-329, Ile-366 to Phe-386, Ala-395 to Met-415, Ala-426 to Ile-446, and Glu-450 to Val-470.

It belongs to the HAK/KUP transporter (TC 2.A.72) family.

It localises to the cell inner membrane. The enzyme catalyses K(+)(in) + H(+)(in) = K(+)(out) + H(+)(out). Its function is as follows. Transport of potassium into the cell. Likely operates as a K(+):H(+) symporter. In Brucella anthropi (strain ATCC 49188 / DSM 6882 / CCUG 24695 / JCM 21032 / LMG 3331 / NBRC 15819 / NCTC 12168 / Alc 37) (Ochrobactrum anthropi), this protein is Probable potassium transport system protein Kup.